Reading from the N-terminus, the 420-residue chain is DNA replication and repair protein RecF (420 aa).

Residue 30-37 participates in ATP binding; sequence GRNGQGKT. A disordered region spans residues 175 to 214; the sequence is RKGGFARKGGFAPLGPPEGRPEGPPEGRTGGSATSGPPSR.

This sequence belongs to the RecF family.

It is found in the cytoplasm. Its function is as follows. The RecF protein is involved in DNA metabolism; it is required for DNA replication and normal SOS inducibility. RecF binds preferentially to single-stranded, linear DNA. It also seems to bind ATP. This chain is DNA replication and repair protein RecF, found in Nocardioides sp. (strain ATCC BAA-499 / JS614).